Here is a 126-residue protein sequence, read N- to C-terminus: Flagellar assembly factor FliW (126 aa).

Belongs to the FliW family. As to quaternary structure, interacts with translational regulator CsrA and flagellin(s).

It is found in the cytoplasm. In terms of biological role, acts as an anti-CsrA protein, binds CsrA and prevents it from repressing translation of its target genes, one of which is flagellin. Binds to flagellin and participates in the assembly of the flagellum. This chain is Flagellar assembly factor FliW, found in Sulfurimonas denitrificans (strain ATCC 33889 / DSM 1251) (Thiomicrospira denitrificans (strain ATCC 33889 / DSM 1251)).